We begin with the raw amino-acid sequence, 380 residues long: Cytochrome b (380 aa).

4 consecutive transmembrane segments (helical) span residues 34 to 54 (FGSLLALCLMTQILTGLLLAM), 78 to 99 (WLIRNMHANGASFFFICIYLHI), 114 to 134 (WNTGVLLLLTLMATAFVGYVL), and 179 to 199 (FFALHFLLPFMIAGLTLIHLT). Heme b-binding residues include His-84 and His-98. Heme b is bound by residues His-183 and His-197. His-202 contributes to the a ubiquinone binding site. 4 consecutive transmembrane segments (helical) span residues 227–247 (LKDILGLALLLLPLTTMALFS), 289–309 (LGGVLALAASVLVLFLSPLLH), 321–341 (LSQLLFWALVANLLILTWIGS), and 348–368 (FIIIGQLASTTYFIILLILFP).

It belongs to the cytochrome b family. In terms of assembly, the cytochrome bc1 complex contains 11 subunits: 3 respiratory subunits (MT-CYB, CYC1 and UQCRFS1), 2 core proteins (UQCRC1 and UQCRC2) and 6 low-molecular weight proteins (UQCRH/QCR6, UQCRB/QCR7, UQCRQ/QCR8, UQCR10/QCR9, UQCR11/QCR10 and a cleavage product of UQCRFS1). This cytochrome bc1 complex then forms a dimer. Requires heme b as cofactor.

It localises to the mitochondrion inner membrane. Functionally, component of the ubiquinol-cytochrome c reductase complex (complex III or cytochrome b-c1 complex) that is part of the mitochondrial respiratory chain. The b-c1 complex mediates electron transfer from ubiquinol to cytochrome c. Contributes to the generation of a proton gradient across the mitochondrial membrane that is then used for ATP synthesis. This is Cytochrome b (MT-CYB) from Oceanodroma microsoma (Least storm petrel).